A 295-amino-acid chain; its full sequence is Small ribosomal subunit biogenesis GTPase RsgA (295 aa).

Residues 68-228 (KNLLTKPHVA…VVDTPGFANL (161 aa)) form the CP-type G domain. GTP-binding positions include 117–120 (NKMD) and 170–178 (GLSGVGKSS). Residues Cys250, Cys255, His257, and Cys263 each coordinate Zn(2+).

It belongs to the TRAFAC class YlqF/YawG GTPase family. RsgA subfamily. As to quaternary structure, monomer. Associates with 30S ribosomal subunit, binds 16S rRNA. Zn(2+) serves as cofactor.

The protein localises to the cytoplasm. Functionally, one of several proteins that assist in the late maturation steps of the functional core of the 30S ribosomal subunit. Helps release RbfA from mature subunits. May play a role in the assembly of ribosomal proteins into the subunit. Circularly permuted GTPase that catalyzes slow GTP hydrolysis, GTPase activity is stimulated by the 30S ribosomal subunit. The sequence is that of Small ribosomal subunit biogenesis GTPase RsgA from Thermotoga petrophila (strain ATCC BAA-488 / DSM 13995 / JCM 10881 / RKU-1).